A 255-amino-acid chain; its full sequence is 1-(5-phosphoribosyl)-5-[(5-phosphoribosylamino)methylideneamino] imidazole-4-carboxamide isomerase (255 aa).

Asp8 (proton acceptor) is an active-site residue. Asp129 functions as the Proton donor in the catalytic mechanism.

Belongs to the HisA/HisF family.

Its subcellular location is the cytoplasm. The enzyme catalyses 1-(5-phospho-beta-D-ribosyl)-5-[(5-phospho-beta-D-ribosylamino)methylideneamino]imidazole-4-carboxamide = 5-[(5-phospho-1-deoxy-D-ribulos-1-ylimino)methylamino]-1-(5-phospho-beta-D-ribosyl)imidazole-4-carboxamide. It functions in the pathway amino-acid biosynthesis; L-histidine biosynthesis; L-histidine from 5-phospho-alpha-D-ribose 1-diphosphate: step 4/9. This Prochlorococcus marinus (strain MIT 9515) protein is 1-(5-phosphoribosyl)-5-[(5-phosphoribosylamino)methylideneamino] imidazole-4-carboxamide isomerase.